The primary structure comprises 21 residues: Bradykinin-potentiating peptide K12 (21 aa).

The segment at 1–21 (LRDYANRVINGGPVEAAGPPA) is disordered.

As to expression, expressed by the venom gland.

The protein localises to the secreted. In terms of biological role, inhibits angiotensin-converting enzyme (ACE), but does not serve as substrate for the enzyme. Potentiate bradykinin (BK) on the isolated guinea pig ileum as well as the isolated rat uterus for contraction. Also potentiates in vivo the depressor effect of BK on arterial blood pressure in the normotensive anesthetized rat. Intracerebroventricular injection into mice does not show toxic activity. In Buthus occitanus (Common European scorpion), this protein is Bradykinin-potentiating peptide K12.